A 156-amino-acid chain; its full sequence is 6,7-dimethyl-8-ribityllumazine synthase (156 aa).

Residues phenylalanine 22, 57 to 59 (AYE), and 81 to 83 (TVI) contribute to the 5-amino-6-(D-ribitylamino)uracil site. Residue 86–87 (GT) participates in (2S)-2-hydroxy-3-oxobutyl phosphate binding. Histidine 89 acts as the Proton donor in catalysis. Phenylalanine 114 is a 5-amino-6-(D-ribitylamino)uracil binding site. Arginine 128 is a binding site for (2S)-2-hydroxy-3-oxobutyl phosphate.

The protein belongs to the DMRL synthase family. Forms an icosahedral capsid composed of 60 subunits, arranged as a dodecamer of pentamers.

It catalyses the reaction (2S)-2-hydroxy-3-oxobutyl phosphate + 5-amino-6-(D-ribitylamino)uracil = 6,7-dimethyl-8-(1-D-ribityl)lumazine + phosphate + 2 H2O + H(+). It participates in cofactor biosynthesis; riboflavin biosynthesis; riboflavin from 2-hydroxy-3-oxobutyl phosphate and 5-amino-6-(D-ribitylamino)uracil: step 1/2. Functionally, catalyzes the formation of 6,7-dimethyl-8-ribityllumazine by condensation of 5-amino-6-(D-ribitylamino)uracil with 3,4-dihydroxy-2-butanone 4-phosphate. This is the penultimate step in the biosynthesis of riboflavin. The protein is 6,7-dimethyl-8-ribityllumazine synthase of Proteus mirabilis (strain HI4320).